We begin with the raw amino-acid sequence, 280 residues long: uncharacterized protein (280 aa).

CBS domains are found at residues 10–67 (QNKK…GSKY), 90–146 (MEEN…KIDE), 154–209 (ITRD…DWAF), and 229–280 (MKRD…KYFA).

This is an uncharacterized protein from Methanocaldococcus jannaschii (strain ATCC 43067 / DSM 2661 / JAL-1 / JCM 10045 / NBRC 100440) (Methanococcus jannaschii).